Reading from the N-terminus, the 95-residue chain is MSQAAVKIDRYITFEGIECDEQARRVLDCIRDCIEAPEASSWSAYFERKLDEITRMGQDELFVVGSQVNYIRALFEHHGHREGLDLLDRIEDECC.

Belongs to the CowN family.

Is required to sustain N(2)-dependent growth in the presence of low levels of carbon monoxide (CO). Probably acts by protecting the N(2) fixation ability of the nitrogenase complex, which is inactivated in the presence of CO. This is N(2)-fixation sustaining protein CowN from Allochromatium vinosum (strain ATCC 17899 / DSM 180 / NBRC 103801 / NCIMB 10441 / D) (Chromatium vinosum).